The sequence spans 570 residues: La-related protein 7 (570 aa).

The residue at position 1 (methionine 1) is an N-acetylmethionine. A compositionally biased stretch (basic and acidic residues) spans 1 to 16; the sequence is METENQKTMEESTKRK. Disordered stretches follow at residues 1-24 and 180-364; these read METE…KRSR and LNNP…ERHK. In terms of domain architecture, HTH La-type RNA-binding spans 22–116; the sequence is RSRVKQVLAD…KPLGERPKDE (95 aa). An RRM domain is found at 119–197; it reads RTVYVELLPK…PRKPGIFPKT (79 aa). Residues 213–222 are compositionally biased toward basic residues; it reads KKKKKKKGRI. Residue lysine 231 forms a Glycyl lysine isopeptide (Lys-Gly) (interchain with G-Cter in SUMO2) linkage. Position 251 is a phosphothreonine (threonine 251). Phosphoserine is present on residues serine 253 and serine 256. Residue threonine 260 is modified to Phosphothreonine. The span at 286–295 shows a compositional bias: basic and acidic residues; that stretch reads RAGKRERCSA. 2 positions are modified to phosphoserine: serine 294 and serine 334. Threonine 335 carries the post-translational modification Phosphothreonine. Over residues 340–349 the composition is skewed to basic and acidic residues; it reads ETDRKGDSLS. Serine 347 bears the Phosphoserine mark. Residues 350–363 show a composition bias toward basic residues; it reads KVKRKHKKKHKERH. Lysine 406 is covalently cross-linked (Glycyl lysine isopeptide (Lys-Gly) (interchain with G-Cter in SUMO2)). A xRRM domain is found at 438–551; that stretch reads QFVTGVIVKI…TEKLITKAEK (114 aa).

The protein belongs to the LARP7 family. As to quaternary structure, core component of the 7SK RNP complex, at least composed of 7SK RNA, LARP7, MEPCE, HEXIM1 (or HEXIM2) and P-TEFb (composed of CDK9 and CCNT1/cyclin-T1). Interacts with METTL16. Interacts with RBM7; upon genotoxic stress this interaction is enhanced, triggering the release of inactive P-TEFb complex from the core, yielding to P-TEFb complex activation. Associates with box C/D small nucleolar ribonucleoprotein (snoRNP) complexes.

It localises to the nucleus. The protein resides in the nucleoplasm. Its function is as follows. RNA-binding protein that specifically binds distinct small nuclear RNA (snRNAs) and regulates their processing and function. Specifically binds the 7SK snRNA (7SK RNA) and acts as a core component of the 7SK ribonucleoprotein (RNP) complex, thereby acting as a negative regulator of transcription elongation by RNA polymerase II. The 7SK RNP complex sequesters the positive transcription elongation factor b (P-TEFb) in a large inactive 7SK RNP complex preventing RNA polymerase II phosphorylation and subsequent transcriptional elongation. The 7SK RNP complex also promotes snRNA gene transcription by RNA polymerase II via interaction with the little elongation complex (LEC). LARP7 specifically binds to the highly conserved 3'-terminal U-rich stretch of 7SK RNA; on stimulation, remains associated with 7SK RNA, whereas P-TEFb is released from the complex. LARP7 also acts as a regulator of mRNA splicing fidelity by promoting U6 snRNA processing. Specifically binds U6 snRNAs and associates with a subset of box C/D RNP complexes: promotes U6 snRNA 2'-O-methylation by facilitating U6 snRNA loading into box C/D RNP complexes. U6 snRNA 2'-O-methylation is required for mRNA splicing fidelity. Binds U6 snRNAs with a 5'-CAGGG-3' sequence motif. U6 snRNA processing is required for spermatogenesis. The sequence is that of La-related protein 7 from Mus musculus (Mouse).